Reading from the N-terminus, the 310-residue chain is Protoheme IX farnesyltransferase (310 aa).

9 consecutive transmembrane segments (helical) span residues Leu-21–Val-43, Met-48–Trp-70, Gly-95–Ala-115, Leu-118–Trp-138, Ile-147–Gly-167, Leu-174–Phe-194, Val-220–Gly-240, Leu-243–Trp-263, and Leu-289–Gly-309.

The protein belongs to the UbiA prenyltransferase family. Protoheme IX farnesyltransferase subfamily. Interacts with CtaA.

Its subcellular location is the cell inner membrane. The catalysed reaction is heme b + (2E,6E)-farnesyl diphosphate + H2O = Fe(II)-heme o + diphosphate. It functions in the pathway porphyrin-containing compound metabolism; heme O biosynthesis; heme O from protoheme: step 1/1. Its function is as follows. Converts heme B (protoheme IX) to heme O by substitution of the vinyl group on carbon 2 of heme B porphyrin ring with a hydroxyethyl farnesyl side group. The protein is Protoheme IX farnesyltransferase of Cereibacter sphaeroides (strain KD131 / KCTC 12085) (Rhodobacter sphaeroides).